An 854-amino-acid polypeptide reads, in one-letter code: Probable inorganic carbon transporter subunit DabA (854 aa).

Residues C378, D380, H560, and C575 each contribute to the Zn(2+) site.

It belongs to the inorganic carbon transporter (TC 9.A.2) DabA family. As to quaternary structure, forms a complex with DabB. Zn(2+) is required as a cofactor.

The protein resides in the cell membrane. In terms of biological role, part of an energy-coupled inorganic carbon pump. The sequence is that of Probable inorganic carbon transporter subunit DabA from Bacillus cereus (strain ATCC 14579 / DSM 31 / CCUG 7414 / JCM 2152 / NBRC 15305 / NCIMB 9373 / NCTC 2599 / NRRL B-3711).